Here is a 183-residue protein sequence, read N- to C-terminus: Peptidoglycan recognition protein 1 (183 aa).

The N-terminal stretch at 1–17 is a signal peptide; that stretch reads MLFAWAPFPALLGLADS. Disulfide bonds link C18-C142, C34-C79, and C55-C61. Positions 40-168 constitute an N-acetylmuramoyl-L-alanine amidase domain; the sequence is KPVRYVVISH…RDVQSTLSPG (129 aa).

It belongs to the N-acetylmuramoyl-L-alanine amidase 2 family. In terms of tissue distribution, expressed in all regions of the brain.

It is found in the secreted. Its subcellular location is the cytoplasmic granule. Its function is as follows. Innate immunity protein that plays several important functions in antimicrobial and antitumor defense systems. Acts as a pattern receptor that binds to murein peptidoglycans (PGN) of Gram-positive bacteria and thus provides bactericidal activity. Forms an equimolar complex with heat shock protein HSPA1A and induces programmed cell death through apoptosis and necroptosis in tumor cell lines by activating the TNFR1 receptor on the target cell membrane. In addition, acts in complex with the Ca(2+)-binding protein S100A4 as a chemoattractant able to induce lymphocyte movement. Mechanistically, this complex acts as a ligand of the chemotactic receptors CCR5 and CXCR3 which are present on the cells of the immune system. Promotes also the activation of lymphocytes that become able to kill virus-infected cells as well as tumor cells by modulating the spectrum of their target-cell specificity. Induction of cytotoxicity on monocyte surface requires interaction with TREM1 receptor. This is Peptidoglycan recognition protein 1 (Pglyrp1) from Rattus norvegicus (Rat).